A 232-amino-acid polypeptide reads, in one-letter code: Cytidylate kinase (232 aa).

11–19 (GPAGAGKST) contacts ATP.

Belongs to the cytidylate kinase family. Type 1 subfamily.

It localises to the cytoplasm. It carries out the reaction CMP + ATP = CDP + ADP. The enzyme catalyses dCMP + ATP = dCDP + ADP. In Desulfitobacterium hafniense (strain Y51), this protein is Cytidylate kinase.